Reading from the N-terminus, the 85-residue chain is U4-theraphotoxin-Hhn1l (85 aa).

An N-terminal signal peptide occupies residues 1-22; that stretch reads MKVTLIAFLTCAAVLVLHTTAA. A propeptide spanning residues 23–48 is cleaved from the precursor; that stretch reads EELEAESQLMGVGMPDTELAAVDEER. 3 disulfides stabilise this stretch: cysteine 52-cysteine 66, cysteine 56-cysteine 77, and cysteine 71-cysteine 82.

Belongs to the neurotoxin 12 (Hwtx-2) family. 02 (Hwtx-2) subfamily. As to expression, expressed by the venom gland.

It localises to the secreted. Functionally, postsynaptic neurotoxin. The sequence is that of U4-theraphotoxin-Hhn1l from Cyriopagopus hainanus (Chinese bird spider).